The primary structure comprises 63 residues: Large ribosomal subunit protein bL28 (63 aa).

Residues 1–20 form a disordered region; the sequence is MSKRCAITGKGPMVGNNVSH.

It belongs to the bacterial ribosomal protein bL28 family.

The sequence is that of Large ribosomal subunit protein bL28 from Campylobacter concisus (strain 13826).